The primary structure comprises 290 residues: Small ribosomal subunit biogenesis GTPase RsgA (290 aa).

The region spanning 61 to 218 (KSELVRPTVA…IVDTPGFSTL (158 aa)) is the CP-type G domain. GTP is bound by residues 110 to 113 (NKID) and 161 to 169 (GPSGAGKST). Zn(2+) contacts are provided by Cys-243, Cys-248, His-250, and Cys-256.

This sequence belongs to the TRAFAC class YlqF/YawG GTPase family. RsgA subfamily. As to quaternary structure, monomer. Associates with 30S ribosomal subunit, binds 16S rRNA. Requires Zn(2+) as cofactor.

Its subcellular location is the cytoplasm. Its function is as follows. One of several proteins that assist in the late maturation steps of the functional core of the 30S ribosomal subunit. Helps release RbfA from mature subunits. May play a role in the assembly of ribosomal proteins into the subunit. Circularly permuted GTPase that catalyzes slow GTP hydrolysis, GTPase activity is stimulated by the 30S ribosomal subunit. The chain is Small ribosomal subunit biogenesis GTPase RsgA from Clostridium beijerinckii (strain ATCC 51743 / NCIMB 8052) (Clostridium acetobutylicum).